A 429-amino-acid chain; its full sequence is MSAELSQSPSSSPLFSLSGADIDRAAKRIAPVVTPTPLQPSDRLSAITGATVYLKREDLQTVRSYKLRGAYNLLVQLSDEELAAGVVCSSAGNHAQGFAYACRCLGVHGRVYVPAKTPKQKRDRIRYHGGEFIDLIVGGSTYDLAAAAALEDVERTGATLVPPFDDLRTIAGQGTIAVEVLGQLEDEPDLVVVPVGGGGCIAGITTYLAERTTNTAVLGVEPAGAAAMMAALAAGEPVTLDHVDQFVDGAAVNRAGTLTYAALAAAGDMVSLTTVDEGAVCTAMLDLYQNEGIIAEPAGALSVAGLLEADIEPGSTVVCLISGGNNDVSRYGEVLERSLVHLGLKHYFLVDFPQEPGALRRFLDDVLGPNDDITLFEYVKRNNRETGEALVGIELGSAADLDGLLARMRATDIHVEALEPGSPAYRYLL.

An N6-(pyridoxal phosphate)lysine modification is found at Lys66. Residues Asn93, 196 to 200 (GGGGC), and Ser322 contribute to the pyridoxal 5'-phosphate site. In terms of domain architecture, ACT-like spans 346–420 (HYFLVDFPQE…TDIHVEALEP (75 aa)).

Belongs to the serine/threonine dehydratase family. In terms of assembly, homotetramer. Pyridoxal 5'-phosphate is required as a cofactor.

It catalyses the reaction L-threonine = 2-oxobutanoate + NH4(+). The protein operates within amino-acid biosynthesis; L-isoleucine biosynthesis; 2-oxobutanoate from L-threonine: step 1/1. Functionally, catalyzes the anaerobic formation of alpha-ketobutyrate and ammonia from threonine in a two-step reaction. The first step involved a dehydration of threonine and a production of enamine intermediates (aminocrotonate), which tautomerizes to its imine form (iminobutyrate). Both intermediates are unstable and short-lived. The second step is the nonenzymatic hydrolysis of the enamine/imine intermediates to form 2-ketobutyrate and free ammonia. In the low water environment of the cell, the second step is accelerated by RidA. In Mycobacterium bovis (strain ATCC BAA-935 / AF2122/97), this protein is L-threonine dehydratase biosynthetic IlvA (ilvA).